Reading from the N-terminus, the 322-residue chain is Deoxycytidylate deaminase (322 aa).

The CMP/dCMP-type deaminase domain occupies 173 to 311 (SWDSYFMEMA…SLLQAAGVQL (139 aa)). His246 provides a ligand contact to Zn(2+). Glu248 functions as the Proton donor in the catalytic mechanism. The Zn(2+) site is built by Cys273 and Cys276.

This sequence belongs to the cytidine and deoxycytidylate deaminase family. Requires Zn(2+) as cofactor.

It is found in the cytoplasm. The protein localises to the nucleus. The enzyme catalyses dCMP + H2O + H(+) = dUMP + NH4(+). Its function is as follows. Supplies the nucleotide substrate for thymidylate synthetase. This is Deoxycytidylate deaminase from Schizosaccharomyces pombe (strain 972 / ATCC 24843) (Fission yeast).